The sequence spans 376 residues: Glutamate 5-kinase (376 aa).

Lys-18 is a binding site for ATP. Substrate contacts are provided by Ser-58, Asp-145, and Asn-157. Residues 177 to 178 (SD) and 218 to 224 (TGGMASK) each bind ATP. One can recognise a PUA domain in the interval 280–358 (TGALTLDAGA…SELPGELRRP (79 aa)).

This sequence belongs to the glutamate 5-kinase family.

The protein localises to the cytoplasm. The enzyme catalyses L-glutamate + ATP = L-glutamyl 5-phosphate + ADP. It functions in the pathway amino-acid biosynthesis; L-proline biosynthesis; L-glutamate 5-semialdehyde from L-glutamate: step 1/2. In terms of biological role, catalyzes the transfer of a phosphate group to glutamate to form L-glutamate 5-phosphate. The protein is Glutamate 5-kinase of Mycobacterium tuberculosis (strain CDC 1551 / Oshkosh).